The sequence spans 241 residues: Phycocyanobilin:ferredoxin oxidoreductase (241 aa).

It belongs to the HY2 family.

It catalyses the reaction (2R,3Z)-phycocyanobilin + 4 oxidized [2Fe-2S]-[ferredoxin] = biliverdin IXalpha + 4 reduced [2Fe-2S]-[ferredoxin] + 4 H(+). In terms of biological role, catalyzes the four-electron reduction of biliverdin IX-alpha (2-electron reduction at both the A and D rings); the reaction proceeds via an isolatable 2-electron intermediate, 181,182-dihydrobiliverdin. This Prochlorococcus marinus (strain MIT 9515) protein is Phycocyanobilin:ferredoxin oxidoreductase.